The sequence spans 363 residues: NADH-quinone oxidoreductase subunit H (363 aa).

A run of 10 helical transmembrane segments spans residues 29–49 (VLKI…YVVW), 62–82 (GPMY…KLLF), 96–116 (FIIA…VVPF), 127–147 (VGLL…ILAG), 163–183 (AAQV…VMIA), 202–222 (FFDW…VSGV), 239–257 (IVAG…LFFL), 264–286 (ILVS…QGWV), 299–319 (TGGW…YIWF), and 339–359 (FIPL…YGVI).

This sequence belongs to the complex I subunit 1 family. NDH-1 is composed of 14 different subunits. Subunits NuoA, H, J, K, L, M, N constitute the membrane sector of the complex.

It localises to the cell inner membrane. It catalyses the reaction a quinone + NADH + 5 H(+)(in) = a quinol + NAD(+) + 4 H(+)(out). NDH-1 shuttles electrons from NADH, via FMN and iron-sulfur (Fe-S) centers, to quinones in the respiratory chain. The immediate electron acceptor for the enzyme in this species is believed to be ubiquinone. Couples the redox reaction to proton translocation (for every two electrons transferred, four hydrogen ions are translocated across the cytoplasmic membrane), and thus conserves the redox energy in a proton gradient. This subunit may bind ubiquinone. In Xanthomonas campestris pv. campestris (strain B100), this protein is NADH-quinone oxidoreductase subunit H.